The chain runs to 333 residues: Cap-specific mRNA (nucleoside-2'-O-)-methyltransferase (333 aa).

Residue tyrosine 22 participates in mRNA binding. The S-adenosyl-L-methionine site is built by glutamine 39, tyrosine 66, glycine 68, glycine 72, aspartate 95, arginine 97, valine 116, and aspartate 138. Residues proline 169 to valine 249 are binding to NPH-I. The tract at residues proline 169–lysine 333 is binding to Rap94. The active-site For methyltransferase activity is lysine 175. MRNA contacts are provided by residues arginine 177–phenylalanine 180, aspartate 182, serine 205–glutamate 207, and glutamate 233.

Belongs to the class I-like SAM-binding methyltransferase superfamily. Poxvirus/kinetoplastid 2'-O-MTase family. In terms of assembly, interacts with poly(A) polymerase catalytic subunit OPG063. Interacts with OPG109 and OPG123; these interactions might help linking transcription to capping and polyadenylation.

The protein resides in the virion. It carries out the reaction a 5'-end (N(7)-methyl 5'-triphosphoguanosine)-ribonucleoside in mRNA + S-adenosyl-L-methionine = a 5'-end (N(7)-methyl 5'-triphosphoguanosine)-(2'-O-methyl-ribonucleoside) in mRNA + S-adenosyl-L-homocysteine + H(+). Displays methyltransferase, positive regulation of the poly(A) polymerase and transcription elongation activities. Involved in the modification of both mRNA ends and in intermediate and late gene positive transcription elongation. At the mRNAs 5' end, methylates the ribose 2' OH group of the first transcribed nucleotide, thereby producing a 2'-O-methylpurine cap. At the 3' end, functions as a processivity factor which stimulates the activity of the viral poly(A) polymerase OPG063 that creates mRNA's poly(A) tail. In the presence of OPG102, OPG063 does not dissociate from the RNA allowing tail elongation to around 250 adenylates. The sequence is that of Cap-specific mRNA (nucleoside-2'-O-)-methyltransferase (OPG102) from Homo sapiens (Human).